A 244-amino-acid polypeptide reads, in one-letter code: uncharacterized protein (244 aa).

This is an uncharacterized protein from Ostreid herpesvirus 1 (isolate France) (OsHV-1).